We begin with the raw amino-acid sequence, 575 residues long: Developmental and secondary metabolism regulator VEL1 (575 aa).

One can recognise a Velvet domain in the interval 21–225; that stretch reads GRKLKYTLTV…AEQGCRVRIR (205 aa). Residues 35 to 40 carry the Nuclear localization signal motif; the sequence is ERARAC. Disordered stretches follow at residues 36-56 and 227-402; these read RARACGSGAKSSADRRPVDPP and DVRM…QSYE. Over residues 274–284 the composition is skewed to basic and acidic residues; that stretch reads VHEDPQQRRGS. Residues 294 to 308 show a composition bias toward polar residues; sequence VVNTPFRTPSISPST. Residues 334–346 show a composition bias toward pro residues; that stretch reads IQPPHPPPPPPSS. Polar residues-rich tracts occupy residues 355–365 and 385–402; these read HHNQGPSTQFR and SYSQFRPPTNPSQQQSYE. Positions 465-509 are PEST; the sequence is AEQPLAMSPLASVTSISRGTQNSAPMPSHNYNKLERSGSYSQYAP. The interval 513–549 is disordered; that stretch reads EAPKSTNKRSFNDVFSTPTESLSNGRRPSAIGIDIEE. Positions 516–538 are enriched in polar residues; the sequence is KSTNKRSFNDVFSTPTESLSNGR.

It belongs to the velvet family. VeA subfamily. In terms of assembly, component of the heterotrimeric velvet complex composed of LAE1, VEL1 and VEL2; VEL1 acting as a bridging protein between LAE1 and VEL2.

The protein resides in the nucleus. Its subcellular location is the cytoplasm. Its function is as follows. Component of the velvet transcription factor complex that controls sexual/asexual developmental ratio in response to light, promoting sexual development in the darkness while stimulating asexual sporulation under illumination. The velvet complex hat acts as a global regulator for secondary metabolite gene expression. Controls the expression of the oxalic acid and melanin gene clusters. Also controls the expression of proteases and carbohydrate-active enzymes. Involved in the resistance to oxidative stress. Required for full virulence. This Botryotinia fuckeliana (strain B05.10) (Noble rot fungus) protein is Developmental and secondary metabolism regulator VEL1.